Here is a 706-residue protein sequence, read N- to C-terminus: Elongation factor G (706 aa).

In terms of domain architecture, tr-type G spans Glu8–Leu295. Residues Ala17 to Thr24, Asp92 to His96, and Asn146 to Asp149 contribute to the GTP site.

This sequence belongs to the TRAFAC class translation factor GTPase superfamily. Classic translation factor GTPase family. EF-G/EF-2 subfamily.

It is found in the cytoplasm. In terms of biological role, catalyzes the GTP-dependent ribosomal translocation step during translation elongation. During this step, the ribosome changes from the pre-translocational (PRE) to the post-translocational (POST) state as the newly formed A-site-bound peptidyl-tRNA and P-site-bound deacylated tRNA move to the P and E sites, respectively. Catalyzes the coordinated movement of the two tRNA molecules, the mRNA and conformational changes in the ribosome. In Ruegeria sp. (strain TM1040) (Silicibacter sp.), this protein is Elongation factor G.